A 524-amino-acid chain; its full sequence is Alkaline phosphatase, tissue-nonspecific isozyme (524 aa).

The signal sequence occupies residues 1–17; sequence MISPFLVLAIGTCLTNS. Aspartate 60 contacts Mg(2+). Residues aspartate 60 and serine 110 each coordinate Zn(2+). The active-site Phosphoserine intermediate is the serine 110. Serine 110 carries the phosphoserine modification. Cysteine 139 and cysteine 201 are oxidised to a cystine. An N-linked (GlcNAc...) asparagine glycan is attached at asparagine 140. Residue threonine 173 participates in Mg(2+) binding. Residue asparagine 230 is glycosylated (N-linked (GlcNAc...) asparagine). Glutamate 235 is a Ca(2+) binding site. The N-linked (GlcNAc...) asparagine glycan is linked to asparagine 271. 2 residues coordinate Ca(2+): phenylalanine 290 and glutamate 291. Asparagine 302 carries N-linked (GlcNAc...) asparagine glycosylation. Aspartate 306 lines the Ca(2+) pocket. Glutamate 332 is a Mg(2+) binding site. Aspartate 337, histidine 341, aspartate 378, and histidine 379 together coordinate Zn(2+). N-linked (GlcNAc...) asparagine glycosylation occurs at asparagine 430. Residue histidine 454 participates in Zn(2+) binding. A disulfide bridge connects residues cysteine 489 and cysteine 497. A lipid anchor (GPI-anchor amidated serine) is attached at serine 499. Residues 500–524 constitute a propeptide, removed in mature form; the sequence is ASSAGGPSPGPLFLLLALPSLGILF.

This sequence belongs to the alkaline phosphatase family. As to quaternary structure, homodimer. Requires Mg(2+) as cofactor. Zn(2+) serves as cofactor. Ca(2+) is required as a cofactor. In terms of processing, N-glycosylated.

The protein resides in the cell membrane. It localises to the extracellular vesicle membrane. The protein localises to the mitochondrion membrane. Its subcellular location is the mitochondrion intermembrane space. The catalysed reaction is a phosphate monoester + H2O = an alcohol + phosphate. The enzyme catalyses diphosphate + H2O = 2 phosphate + H(+). It carries out the reaction pyridoxal 5'-phosphate + H2O = pyridoxal + phosphate. It catalyses the reaction phosphoethanolamine + H2O = ethanolamine + phosphate. The catalysed reaction is N-phosphocreatine + H2O = creatine + phosphate. The enzyme catalyses ATP + H2O = ADP + phosphate + H(+). It carries out the reaction ADP + H2O = AMP + phosphate + H(+). It catalyses the reaction AMP + H2O = adenosine + phosphate. Its activity is regulated as follows. Phosphatase activity is specifically inhibited by 5-((5-chloro-2-methoxyphenyl)sulfonamido)nicotinamide (SBI-425). Functionally, alkaline phosphatase that metabolizes various phosphate compounds and plays a key role in skeletal mineralization and adaptive thermogenesis. Has broad substrate specificity and can hydrolyze a considerable variety of compounds: however, only a few substrates, such as diphosphate (inorganic pyrophosphate; PPi), pyridoxal 5'-phosphate (PLP) and N-phosphocreatine are natural substrates. Plays an essential role in skeletal and dental mineralization via its ability to hydrolyze extracellular diphosphate, a potent mineralization inhibitor, to phosphate: it thereby promotes hydroxyapatite crystal formation and increases inorganic phosphate concentration. Acts in a non-redundant manner with PHOSPHO1 in skeletal mineralization: while PHOSPHO1 mediates the initiation of hydroxyapatite crystallization in the matrix vesicles (MVs), ALPL/TNAP catalyzes the spread of hydroxyapatite crystallization in the extracellular matrix. Also promotes dephosphorylation of osteopontin (SSP1), an inhibitor of hydroxyapatite crystallization in its phosphorylated state; it is however unclear whether ALPL/TNAP mediates SSP1 dephosphorylation via a direct or indirect manner. Catalyzes dephosphorylation of PLP to pyridoxal (PL), the transportable form of vitamin B6, in order to provide a sufficient amount of PLP in the brain, an essential cofactor for enzymes catalyzing the synthesis of diverse neurotransmitters. Additionally, also able to mediate ATP degradation in a stepwise manner to adenosine, thereby regulating the availability of ligands for purinergic receptors. Also capable of dephosphorylating microbial products, such as lipopolysaccharides (LPS) as well as other phosphorylated small-molecules, such as poly-inosine:cytosine (poly I:C). Acts as a key regulator of adaptive thermogenesis as part of the futile creatine cycle: localizes to the mitochondria of thermogenic fat cells and acts by mediating hydrolysis of N-phosphocreatine to initiate a futile cycle of creatine dephosphorylation and phosphorylation. During the futile creatine cycle, creatine and N-phosphocreatine are in a futile cycle, which dissipates the high energy charge of N-phosphocreatine as heat without performing any mechanical or chemical work. The chain is Alkaline phosphatase, tissue-nonspecific isozyme (ALPL) from Felis catus (Cat).